Here is a 121-residue protein sequence, read N- to C-terminus: Small ribosomal subunit protein uS12c (121 aa).

The protein belongs to the universal ribosomal protein uS12 family. As to quaternary structure, part of the 30S ribosomal subunit.

Its subcellular location is the plastid. The protein localises to the apicoplast. In terms of biological role, with S4 and S5 plays an important role in translational accuracy. Located at the interface of the 30S and 50S subunits. This chain is Small ribosomal subunit protein uS12c (rps12), found in Toxoplasma gondii.